The following is a 400-amino-acid chain: Nicotinate phosphoribosyltransferase (400 aa).

A Phosphohistidine; by autocatalysis modification is found at His220.

The protein belongs to the NAPRTase family. Transiently phosphorylated on a His residue during the reaction cycle. Phosphorylation strongly increases the affinity for substrates and increases the rate of nicotinate D-ribonucleotide production. Dephosphorylation regenerates the low-affinity form of the enzyme, leading to product release.

It catalyses the reaction nicotinate + 5-phospho-alpha-D-ribose 1-diphosphate + ATP + H2O = nicotinate beta-D-ribonucleotide + ADP + phosphate + diphosphate. It participates in cofactor biosynthesis; NAD(+) biosynthesis; nicotinate D-ribonucleotide from nicotinate: step 1/1. In terms of biological role, catalyzes the synthesis of beta-nicotinate D-ribonucleotide from nicotinate and 5-phospho-D-ribose 1-phosphate at the expense of ATP. The protein is Nicotinate phosphoribosyltransferase of Escherichia coli O157:H7.